The following is a 698-amino-acid chain: MSQEKKVFKTEWAGRSLTIETGQLAKQANGAVLVRYGDTVVLSTATASKEPRDGDFFPLTVNYEEKMYAAGKIPGGFKKREGRPGDDATLTARLIDRPIRPLFPKGYKHDVQIMNMVLSADPDCSPQMAAMIGSSMALSVSDIPFQGPIAGVNVGYIDGKYIINPTVEEKEVSRLDLEVAGHKDAVNMVEAGASEITEQEMLEAIFFGHEEIQRLVDFQQQIVDHIQPVKQEFIPTERDEALVERVKSLTEEKGLKETVLTFDKQQRDENLDNLKEEIVNEFIDEEDPENELLIKEVYAILNELVKEEVRRLIADEKIRPDGRKPDEIRPLDSEVGILPRTHGSGLFTRGQTQALSVLTLGALGDYQLIDGLGPEEEKRFMHHYNFPNFSVGETGPVRAPGRREIGHGALGERALKYIIPDTADFPYTIRIVSEVLESNGSSSQASICGSTLALMDAGVPIKAPVAGIAMGLVTREDSYTILTDIQGMEDALGDMDFKVAGTKEGITAIQMDIKIDGLTREIIEEALEQARRGRLEIMNHMLQTIDQPRTELSAYAPKVVTMTIKPDKIRDVIGPGGKKINEIIDETGVKLDIEQDGTIFIGAVDQAMINRAREIIEEITREAEVGQTYQATVKRIEKYGAFVGLFPGKDALLHISQISKNRIEKVEDVLKIGDTIEVKITEIDKQGRVNASHRALEE.

The Mg(2+) site is built by Asp490 and Asp496. Residues 557-616 (PKVVTMTIKPDKIRDVIGPGGKKINEIIDETGVKLDIEQDGTIFIGAVDQAMINRAREII) form the KH domain. In terms of domain architecture, S1 motif spans 626–694 (GQTYQATVKR…KQGRVNASHR (69 aa)).

It belongs to the polyribonucleotide nucleotidyltransferase family. The cofactor is Mg(2+).

It localises to the cytoplasm. It catalyses the reaction RNA(n+1) + phosphate = RNA(n) + a ribonucleoside 5'-diphosphate. Involved in mRNA degradation. Catalyzes the phosphorolysis of single-stranded polyribonucleotides processively in the 3'- to 5'-direction. This chain is Polyribonucleotide nucleotidyltransferase, found in Staphylococcus aureus (strain MRSA252).